Here is a 320-residue protein sequence, read N- to C-terminus: Acetyl-coenzyme A carboxylase carboxyl transferase subunit alpha (320 aa).

In terms of domain architecture, CoA carboxyltransferase C-terminal spans 33-294; sequence AFDGEIESLR…GDAVEEELKA (262 aa).

It belongs to the AccA family. In terms of assembly, acetyl-CoA carboxylase is a heterohexamer composed of biotin carboxyl carrier protein (AccB), biotin carboxylase (AccC) and two subunits each of ACCase subunit alpha (AccA) and ACCase subunit beta (AccD).

It localises to the cytoplasm. The enzyme catalyses N(6)-carboxybiotinyl-L-lysyl-[protein] + acetyl-CoA = N(6)-biotinyl-L-lysyl-[protein] + malonyl-CoA. It participates in lipid metabolism; malonyl-CoA biosynthesis; malonyl-CoA from acetyl-CoA: step 1/1. In terms of biological role, component of the acetyl coenzyme A carboxylase (ACC) complex. First, biotin carboxylase catalyzes the carboxylation of biotin on its carrier protein (BCCP) and then the CO(2) group is transferred by the carboxyltransferase to acetyl-CoA to form malonyl-CoA. The sequence is that of Acetyl-coenzyme A carboxylase carboxyl transferase subunit alpha from Phenylobacterium zucineum (strain HLK1).